The primary structure comprises 373 residues: MTDNSKIRVVVGMSGGVDSSVTALLLKEQGYDVIGVFMKNWDDTDEFGVCTATEDYKDVAAVADQIGIPYYSVNFEKEYWDRVFEYFLAEYRAGRTPNPDVMCNKEIKFKAFLDYAMTLGADYVATGHYAQVKRDENGTVHMLRGADNGKDQTYFLSQLSQEQLQKTLFPLGHLQKSEVREIAERAGLATAKKKDSTGICFIGEKNFKQFLSQYLPAQKGRMMTIDGRDMGEHAGLMYYTIGQRGGLGIGGQHGGDNQPWFVVGKDLSQNILYVGQGFYHEALMSNSLDASVIHFTREMPEEFTFECTAKFRYRQPDSHVTVHVRGDKAEVVFAEPQRAITPGQAVVFYDGKECLGGGMIDMAYKNGQPCQYI.

Residues 12–19 (GMSGGVDS) and Met38 contribute to the ATP site. The tract at residues 98-100 (NPD) is interaction with target base in tRNA. Cys103 serves as the catalytic Nucleophile. Cysteines 103 and 200 form a disulfide. Gly127 lines the ATP pocket. An interaction with tRNA region spans residues 150–152 (KDQ). The active-site Cysteine persulfide intermediate is the Cys200. The segment at 312–313 (RY) is interaction with tRNA.

It belongs to the MnmA/TRMU family.

Its subcellular location is the cytoplasm. It catalyses the reaction S-sulfanyl-L-cysteinyl-[protein] + uridine(34) in tRNA + AH2 + ATP = 2-thiouridine(34) in tRNA + L-cysteinyl-[protein] + A + AMP + diphosphate + H(+). Its function is as follows. Catalyzes the 2-thiolation of uridine at the wobble position (U34) of tRNA, leading to the formation of s(2)U34. The sequence is that of tRNA-specific 2-thiouridylase MnmA from Streptococcus pyogenes serotype M12 (strain MGAS2096).